Reading from the N-terminus, the 186-residue chain is Inner membrane-spanning protein YciB (186 aa).

5 helical membrane-spanning segments follow: residues 10 to 30, 47 to 67, 76 to 96, 121 to 141, and 149 to 169; these read IILF…AVAI, VEPL…ATLL, WKPT…QLMF, WGWT…AYHF, and FKLF…ALYL.

Belongs to the YciB family.

The protein resides in the cell inner membrane. Functionally, plays a role in cell envelope biogenesis, maintenance of cell envelope integrity and membrane homeostasis. In Acidovorax ebreus (strain TPSY) (Diaphorobacter sp. (strain TPSY)), this protein is Inner membrane-spanning protein YciB.